A 178-amino-acid chain; its full sequence is Large ribosomal subunit protein uL6 (178 aa).

Belongs to the universal ribosomal protein uL6 family. Part of the 50S ribosomal subunit.

This protein binds to the 23S rRNA, and is important in its secondary structure. It is located near the subunit interface in the base of the L7/L12 stalk, and near the tRNA binding site of the peptidyltransferase center. This is Large ribosomal subunit protein uL6 from Campylobacter jejuni subsp. jejuni serotype O:2 (strain ATCC 700819 / NCTC 11168).